The sequence spans 150 residues: Geranyl diphosphate phosphohydrolase (150 aa).

The Nudix hydrolase domain maps to 14–147 (SIKVAVVVCL…DNVVQDGFNP (134 aa)). The Nudix box motif lies at 48 to 69 (GHLEFGESFEECAARELKEETD). E63 and E67 together coordinate Mg(2+).

It belongs to the Nudix hydrolase family. Expressed in petals. Little or no expression in stamens, sepals or young leaves.

Its subcellular location is the cytoplasm. The enzyme catalyses (2E)-geranyl diphosphate + H2O = (2E)-geranyl phosphate + phosphate + H(+). In terms of biological role, involved in a cytosolic pathway for the biosynthesis of free monoterpene alcohols that contribute to fragrance. Lacks terpene synthase activity, but has a diphosphohydrolase activity with geranyl diphosphate and farnesyl diphosphate as substrates. No activity with 8-oxo-dGTP and dGTP and unable to dephosphorylate geranyl phosphate to geraniol. This chain is Geranyl diphosphate phosphohydrolase, found in Rosa hybrid cultivar.